An 881-amino-acid polypeptide reads, in one-letter code: DNA mismatch repair protein MutS (881 aa).

Residue 632–639 (GPNMGGKS) coordinates ATP.

It belongs to the DNA mismatch repair MutS family.

This protein is involved in the repair of mismatches in DNA. It is possible that it carries out the mismatch recognition step. This protein has a weak ATPase activity. In Chelativorans sp. (strain BNC1), this protein is DNA mismatch repair protein MutS.